Here is a 396-residue protein sequence, read N- to C-terminus: Inositol polyphosphate 1-phosphatase (396 aa).

D54 contacts Li(+). Position 79 (E79) interacts with Mg(2+). E80 is a Li(+) binding site. Mg(2+) is bound by residues D153 and I155. Residues D156, S157, T158, S264, K266, G286, A287, K290, and T308 each coordinate 1D-myo-inositol 1,4-bisphosphate. D313 contributes to the Mg(2+) binding site. A Phosphoserine modification is found at S314.

This sequence belongs to the inositol monophosphatase superfamily. As to quaternary structure, monomer. Mg(2+) is required as a cofactor.

It catalyses the reaction 1D-myo-inositol 1,4-bisphosphate + H2O = 1D-myo-inositol 4-phosphate + phosphate. The catalysed reaction is 1D-myo-inositol 1,3,4-trisphosphate + H2O = 1D-myo-inositol 3,4-bisphosphate + phosphate. Its pathway is signal transduction; phosphatidylinositol signaling pathway. Its activity is regulated as follows. Inhibited by Li(+). Its function is as follows. Mg(2+)-dependent phosphatase that catalyzes the hydrolysis of the 1-position phosphate from inositol 1,4-bisphosphate and inositol 1,3,4-trisphosphate and participates in inositol phosphate metabolism. This is Inositol polyphosphate 1-phosphatase from Mus musculus (Mouse).